Reading from the N-terminus, the 92-residue chain is Putative pterin-4-alpha-carbinolamine dehydratase (92 aa).

This sequence belongs to the pterin-4-alpha-carbinolamine dehydratase family.

The catalysed reaction is (4aS,6R)-4a-hydroxy-L-erythro-5,6,7,8-tetrahydrobiopterin = (6R)-L-erythro-6,7-dihydrobiopterin + H2O. This chain is Putative pterin-4-alpha-carbinolamine dehydratase, found in Picosynechococcus sp. (strain ATCC 27264 / PCC 7002 / PR-6) (Agmenellum quadruplicatum).